Here is a 601-residue protein sequence, read N- to C-terminus: Glutathione-regulated potassium-efflux system protein KefB (601 aa).

Transmembrane regions (helical) follow at residues 4–24, 29–49, 55–75, 87–107, 115–135, 152–172, 177–197, 207–227, 230–250, 268–288, 291–311, 324–344, and 356–376; these read SDFLLAGVLFLFAAVAAVPLA, IGAVLGYLLAGIAIGPWGLGF, EILHFSELGVVFLMFIIGLEL, IFGVGAAQVLLSAALLAGLLM, AAVVGGIGLAMSSTAMALQLM, VLLFQDLAVIPALALVPLLAG, HFDWMKVGMKVLAFVGMLIGG, FIAASGVREVFTAATLLLVLG, LFMDALGLSMALGTFIAGVLL, GLLLGLFFISVGMSLNLGVLY, LLWVVISVVVLVAVKILVLYL, MQFAGVLSQGGEFAFVLFSTA, and ALLLVTVTLSMMTTPLLMKLV. The 120-residue stretch at 400–519 folds into the RCK N-terminal domain; it reads KPQVIVVGFG…AGVTQFSRET (120 aa).

Belongs to the monovalent cation:proton antiporter 2 (CPA2) transporter (TC 2.A.37) family. KefB subfamily. As to quaternary structure, interacts with the regulatory subunit KefG.

The protein localises to the cell inner membrane. Its activity is regulated as follows. Activated by adducts between glutathione and electrophiles. In terms of biological role, pore-forming subunit of a potassium efflux system that confers protection against electrophiles. Catalyzes K(+)/H(+) antiport. The protein is Glutathione-regulated potassium-efflux system protein KefB of Escherichia coli (strain K12).